Reading from the N-terminus, the 388-residue chain is Leucine aminopeptidase 1 (388 aa).

The N-terminal stretch at 1-19 is a signal peptide; the sequence is MRSSVLFSLYAATLVAAVA. A propeptide spanning residues 20–88 is cleaved from the precursor; sequence HPKDPQIVLQ…TLNHKLSTES (69 aa). An N-linked (GlcNAc...) asparagine glycan is attached at asparagine 98. Residues histidine 187, aspartate 206, glutamate 245, and aspartate 272 each contribute to the Zn(2+) site. A disulfide bond links cysteine 321 and cysteine 325. Histidine 354 is a Zn(2+) binding site.

The protein belongs to the peptidase M28 family. M28E subfamily. In terms of assembly, monomer. It depends on Zn(2+) as a cofactor.

It localises to the secreted. Extracellular aminopeptidase that allows assimilation of proteinaceous substrates. The polypeptide is Leucine aminopeptidase 1 (LAP1) (Leptosphaeria maculans (strain JN3 / isolate v23.1.3 / race Av1-4-5-6-7-8) (Blackleg fungus)).